A 552-amino-acid chain; its full sequence is MKKNRERFCNKEREFVYKFQVGRERLELRVPLRFPVEENASHLHGRLMLLHSLPCFIESDLKDALSRFIEEESLRDHDSDAEACLEAVKSGEVDLHQLASAWAKAYAETTLEHARPEEPDWDEDFADVYHDLIHSPASETLLNLEHNYFVSISELIGERDVELKKLRERQGIEMEKVMQELGKSLTDQDVNSLAAQHFESQQDLENKWSNELKQSTAIQKQEYQEWVIKLHQDLKNPNNSSLSEEIKVQPSQFRESADAAGRIYEEQRKLEESFTIHLGAQLKTMHNLRLLRADMLDFCKHKRTHGSGVKLHRLQTALSLYSTSLCGLVLLVDNRINSYSGIKRDFATVCQECTDFHFPRIEEQLEVVQQVALYARTQRKSKCKEARDSGNQNGGSDDKSKNAERNYLNILPGEFYITRHSNLSEIHVAFHLCVDDNVKSGNITARDPAIMGLRNILKVCCTHDITTISIPLLLVHDMSEEMTIPWCLRRAELVFKCVKGFMMEMASWDGGISRTVQFLVPQSISEEMFYQLSNMLPQIFRVSSTLTLTSKH.

The residue at position 79 (S79) is a Phosphoserine.

Component of the FERRY complex composed of five subunits, TBCK, PPP1R21, FERRY3, CRYZL1 and GATD1 with a ratio of 1:2:1:2:4, respectively.

The protein resides in the cytoplasm. The protein localises to the early endosome. Component of the FERRY complex (Five-subunit Endosomal Rab5 and RNA/ribosome intermediary). The FERRY complex directly interacts with mRNAs and RAB5A, and functions as a RAB5A effector involved in the localization and the distribution of specific mRNAs most likely by mediating their endosomal transport. The complex recruits mRNAs and ribosomes to early endosomes through direct mRNA-interaction. Plays a role in mast cell degranulation. This chain is FERRY endosomal RAB5 effector complex subunit 3, found in Mus musculus (Mouse).